Consider the following 360-residue polypeptide: LETM1 domain-containing protein 1 (360 aa).

A required and sufficient for mitochondrial import region spans residues 1 to 110 (MALSRVCWAR…KKARRIKTNM (110 aa)). Topologically, residues 1–137 (MALSRVCWAR…LRQFRQDVTK (137 aa)) are cytoplasmic. The helical transmembrane segment at 138–158 (CLFLGIISIPPFANYLVFLLM) threads the bilayer. Topologically, residues 159–360 (YLFPRQLLIR…LSTNYLGTRR (202 aa)) are mitochondrial intermembrane. A Letm1 RBD domain is found at 186–360 (FRKQSHPEII…LSTNYLGTRR (175 aa)).

In terms of assembly, interacts with BRI3BP. Interacts (via C-terminal) with SMARCA4; the interaction regulates transcriptional expression of thermogenic genes in brown adipose tissue. In terms of tissue distribution, kidney, liver, skeletal muscle, heart and brain. Overexpressed in various tumors including leukemia, lymphoma, and carcinomas of the breast, kidney, ovary, stomach, colon and uterine cervix.

The protein localises to the mitochondrion outer membrane. It localises to the nucleus. The protein resides in the mitochondrion inner membrane. Its function is as follows. Plays an essential role for mitochondrial structure and function, as well as thermogenesis of brown adipocytes. In brown adipose tissue also localizes in the nucleus where it interacts with the chromatin remodeler SMARCA4 to regulate thermogenic genes expression, such as UCP1. May regulate phagocytosis and inflammatory responses to lipopolysaccharide in macrophages. Involved in tumorigenesis and may function as a negative regulator of the p53/TP53. The sequence is that of LETM1 domain-containing protein 1 from Homo sapiens (Human).